The sequence spans 992 residues: UPF0182 protein RHA1_ro06389 (992 aa).

The next 7 membrane-spanning stretches (helical) occupy residues 18 to 38, 63 to 83, 114 to 134, 174 to 194, 211 to 231, 260 to 280, and 288 to 308; these read VLLV…RLIS, LLLF…ALLL, LFGL…AQSS, WLFV…YIFG, VQLA…YWFD, KLIL…AIFL, and MATA…PLVV. A disordered region spans residues 904-948; it reads TGSVATAPSAEEGTPPETGTTPPVDQGAAPAPTAPATPPSGTDVS. Positions 908–934 are enriched in low complexity; that stretch reads ATAPSAEEGTPPETGTTPPVDQGAAPA.

This sequence belongs to the UPF0182 family.

It localises to the cell membrane. The sequence is that of UPF0182 protein RHA1_ro06389 from Rhodococcus jostii (strain RHA1).